Consider the following 348-residue polypeptide: Propane 2-monooxygenase, reductase component (348 aa).

One can recognise a 2Fe-2S ferredoxin-type domain in the interval 5-95; that stretch reads HKINFDPVDI…DCTIELLNFD (91 aa). [2Fe-2S] cluster-binding residues include Cys39, Cys44, Cys47, and Cys79. Residues 105–206 form the FAD-binding FR-type domain; sequence IQDVRTQVQA…TGPYGSFTLK (102 aa).

This sequence belongs to the bacterial ring-hydroxylating dioxygenase ferredoxin reductase family. In terms of assembly, the propane 2-monooxygenase multicomponent enzyme system is composed of an electron transfer component and a monooxygenase component interacting with the effector protein MimD. The electron transfer component is composed of a reductase (MimB), and the monooxygenase component is formed by a large subunit (MimA) and a small subunit (MimC). FAD serves as cofactor. [2Fe-2S] cluster is required as a cofactor.

In terms of biological role, reductase component of the propane 2-monooxygenase multicomponent enzyme system which is involved in the degradation of propane via the O2-dependent hydroxylation of propane. Reductase catalyzes the transfer of electrons from NADH or NADPH to monooxygenase. The sequence is that of Propane 2-monooxygenase, reductase component from Mycolicibacterium smegmatis (strain ATCC 700084 / mc(2)155) (Mycobacterium smegmatis).